The following is a 210-amino-acid chain: Pyridoxine/pyridoxamine 5'-phosphate oxidase (210 aa).

Residues 7 to 10 (REDY) and Lys65 contribute to the substrate site. Residues 60–65 (RVVLLK), 75–76 (FT), Arg81, Lys82, and Gln104 each bind FMN. 3 residues coordinate substrate: Tyr122, Arg126, and Ser130. Residues 139 to 140 (QS) and Trp183 contribute to the FMN site. A substrate-binding site is contributed by 189–191 (RLH). FMN is bound at residue Arg193.

This sequence belongs to the pyridoxamine 5'-phosphate oxidase family. Homodimer. It depends on FMN as a cofactor.

The catalysed reaction is pyridoxamine 5'-phosphate + O2 + H2O = pyridoxal 5'-phosphate + H2O2 + NH4(+). It catalyses the reaction pyridoxine 5'-phosphate + O2 = pyridoxal 5'-phosphate + H2O2. The protein operates within cofactor metabolism; pyridoxal 5'-phosphate salvage; pyridoxal 5'-phosphate from pyridoxamine 5'-phosphate: step 1/1. It participates in cofactor metabolism; pyridoxal 5'-phosphate salvage; pyridoxal 5'-phosphate from pyridoxine 5'-phosphate: step 1/1. Functionally, catalyzes the oxidation of either pyridoxine 5'-phosphate (PNP) or pyridoxamine 5'-phosphate (PMP) into pyridoxal 5'-phosphate (PLP). The sequence is that of Pyridoxine/pyridoxamine 5'-phosphate oxidase from Actinobacillus succinogenes (strain ATCC 55618 / DSM 22257 / CCUG 43843 / 130Z).